Consider the following 365-residue polypeptide: G-protein coupled receptor 68 (365 aa).

Over 1-12 (MGNITADNSSMS) the chain is Extracellular. N-linked (GlcNAc...) asparagine glycosylation is found at Asn3 and Asn8. Residues 13–49 (CTIDHTIHQTLAPVVYVTVLVVGFPANCLSLYFGYLQ) form a helical membrane-spanning segment. Intrachain disulfides connect Cys13/Cys258 and Cys94/Cys172. Over 50-53 (IKAR) the chain is Cytoplasmic. A helical membrane pass occupies residues 54 to 84 (NELGVYLCNLTVADLFYICSLPFWLQYVLQH). At 85–89 (DNWSH) the chain is on the extracellular side. Residues 90-125 (GDLSCQVCGILLYENIYISVGFLCCISVDRYLAVAH) traverse the membrane as a helical segment. Residues 126–133 (PFRFHQFR) lie on the Cytoplasmic side of the membrane. The chain crosses the membrane as a helical span at residues 134–160 (TLKAAVGVSVVIWAKELLTSIYFLMHE). Residues 161-176 (EVIEDENQHRVCFEHY) lie on the Extracellular side of the membrane. Residues 161–176 (EVIEDENQHRVCFEHY) form an extracellular loop 2 (ECL2) region. A helical membrane pass occupies residues 177–214 (PIQAWQRAINYYRFLVGFLFPICLLLASYQGILRAVRR). At 215–218 (SHGT) the chain is on the cytoplasmic side. The chain crosses the membrane as a helical span at residues 219–254 (QKSRKDQIQRLVLSTVVIFLACFLPYHVLLLVRSVW). The Extracellular portion of the chain corresponds to 255–260 (EASCDF). The helical transmembrane segment at 261 to 289 (AKGVFNAYHFSLLLTSFNCVADPVLYCFV) threads the bilayer. The Cytoplasmic portion of the chain corresponds to 290 to 365 (SETTHRDLAR…SGGFPTGRLA (76 aa)). Residues 345–365 (HPAFQTPNSPGSGGFPTGRLA) form a disordered region. Positions 355-365 (GSGGFPTGRLA) are enriched in gly residues.

The protein belongs to the G-protein coupled receptor 1 family. In terms of tissue distribution, found at low level in a wide range of tissues, but significantly expressed in lung, kidney, bone and nervous system.

The protein resides in the cell membrane. Activated by a network of residues that connects an extracellular-facing cavity to Glu-149, a conserved charged residue buried in the transmembrane core of the receptor. Protonation likely drives conformational changes in extracellular loop 2 (ECL2), which stabilizes movement of transmembrane 3 (TM3) and a series of rearrangements that connect the extracellular-facing cavity to Glu-149, a residue only conserved in proton-sensing G-protein coupled receptors. Activated in an allosteric manner by divalent metal ions at the extracellular surface following the order: Cd(2+) &gt; Co(2+) &gt; Ni(2+) &gt; Zn(2+) &gt; Fe(2+) &gt; Ca(2+) &gt; Mg(2+). Activated by the benzodiazepine drug lorazepam, a non-selective GPR68 positive allosteric modulator. Activated by ogerin (ZINC67740571), a selective GPR68 positive allosteric modulator. Activated by small molecule MS48107, a selective positive allosteric modulator. Inhibited by small molecule ogremorphin, inducing ferroptosis in cancer cells. In terms of biological role, proton-sensing G-protein coupled receptor activated by extracellular pH, which is required to monitor pH changes and generate adaptive reactions. The receptor is almost silent at pH 7.8 but fully activated at pH 6.8. Ligand binding causes a conformation change that triggers signaling via guanine nucleotide-binding proteins (G proteins) and modulates the activity of downstream effectors, such as phospholipase C. GPR68 is mainly coupled to G(q) G proteins and mediates production of diacylglycerol (DAG) and inositol 1,4,5-trisphosphate (IP3). Acts as a key mechanosensor of fluid shear stress and membrane stretch. Expressed in endothelial cells of small-diameter resistance arteries, where it mediates flow-induced dilation in response to shear stress. May represents an osteoblastic pH sensor regulating cell-mediated responses to acidosis in bone. Acts as a regulator of calcium-sensing receptor CASR in a seesaw manner: GPR68-mediated signaling inhibits CASR signaling in response to protons, while CASR inhibits GPR68 in presence of extracellular calcium. The polypeptide is G-protein coupled receptor 68 (Homo sapiens (Human)).